The primary structure comprises 184 residues: Cathelicidin-related peptide Pt_CRAMP1 (184 aa).

The first 22 residues, 1-22 (MEGFFWKTWLVVAAFAIGGTSS), serve as a signal peptide directing secretion. Positions 23–150 (LPHKPLTYEE…EDEKDQPRRV (128 aa)) are excised as a propeptide. 2 cysteine pairs are disulfide-bonded: Cys81–Cys92 and Cys103–Cys120. Residues 125–144 (EDEEQNQEEEEEEEKEEDEK) show a composition bias toward acidic residues. The disordered stretch occupies residues 125-147 (EDEEQNQEEEEEEEKEEDEKDQP).

The protein belongs to the cathelicidin family. In terms of tissue distribution, expressed by the venom gland.

It localises to the secreted. The protein resides in the target cell membrane. In terms of biological role, potent antimicrobial peptide against Gram-negative (MIC=2 ug/ml against E.coli ATCC 25922, MIC=8 ug/ml against P.aeruginosa) and Gram-positive bacteria (MIC=32 ug/ml against E.faecalis, MIC=32 ug/ml against S.aureus). Adopts an amphipathic alpha helical conformation, that may allow to partition into the target membrane. High hemolytic activities have been observed on mammalian cells. The protein is Cathelicidin-related peptide Pt_CRAMP1 of Pseudonaja textilis (Eastern brown snake).